The sequence spans 403 residues: D-mannonate dehydratase Caul1427 (403 aa).

Substrate contacts are provided by Asn38 and His123. The Proton donor/acceptor role is filled by Tyr160. Asp211 contacts Mg(2+). His213 acts as the Proton donor/acceptor in catalysis. Glu237 and Glu263 together coordinate Mg(2+). Substrate-binding residues include Glu263, Arg284, His313, Asp317, and Glu340.

Belongs to the mandelate racemase/muconate lactonizing enzyme family. GalD subfamily. Mg(2+) is required as a cofactor.

It catalyses the reaction D-mannonate = 2-dehydro-3-deoxy-D-gluconate + H2O. The protein operates within carbohydrate metabolism; pentose and glucuronate interconversion. Functionally, catalyzes the dehydration of D-mannonate. Has no detectable activity with a panel of 70 other acid sugars (in vitro). This Caulobacter sp. (strain K31) protein is D-mannonate dehydratase Caul1427.